A 137-amino-acid polypeptide reads, in one-letter code: Endoribonuclease YbeY (137 aa).

Zn(2+) contacts are provided by histidine 103, histidine 107, and histidine 113.

The protein belongs to the endoribonuclease YbeY family. Requires Zn(2+) as cofactor.

It is found in the cytoplasm. Single strand-specific metallo-endoribonuclease involved in late-stage 70S ribosome quality control and in maturation of the 3' terminus of the 16S rRNA. The protein is Endoribonuclease YbeY of Acholeplasma laidlawii (strain PG-8A).